A 324-amino-acid polypeptide reads, in one-letter code: Pancreas transcription factor 1 subunit alpha (324 aa).

Residues 160 to 212 form the bHLH domain; the sequence is QLRQAANVRERRRMQSINDAFEGLRSHIPTLPYEKRLSKVDTLRLAIGYINFL. The interval 302–324 is disordered; that stretch reads DPRKLNSKSFDNIENEPPFEFVS.

Component of the pancreas transcription factor 1 complex (PTF1) which is composed of TCF3/p75, TCF12/p64 and PTF1A/p48. TCF3 is responsible for the nuclear import of the p48/p64 complex. Interacts with TCF3 and RBPSUH/RBP-Jkappa. In terms of tissue distribution, expressed in precursors of pancreatic islets, acini and ducts.

Its subcellular location is the nucleus. The protein resides in the cytoplasm. In terms of biological role, transcription factor implicated in the cell fate determination in various organs. Binds to the E-box consensus sequence 5'-CANNTG-3'. Plays a role in early and late pancreas development and differentiation. Important for determining whether cells allocated to the pancreatic buds continue towards pancreatic organogenesis or revert back to duodenal fates. May be involved in the maintenance of exocrine pancreas-specific gene expression including ELA1 and amylase. Required for the formation of pancreatic acinar and ductal cells. Plays an important role in cerebellar development. Directly regulated by FOXN4 and RORC during retinal development, FOXN4-PTF1A pathway plays a central role in directing the differentiation of retinal progenitors towards horizontal and amacrine fates. The polypeptide is Pancreas transcription factor 1 subunit alpha (Ptf1a) (Mus musculus (Mouse)).